The primary structure comprises 349 residues: Phenylalanine--tRNA ligase alpha subunit (349 aa).

E259 is a Mg(2+) binding site.

Belongs to the class-II aminoacyl-tRNA synthetase family. Phe-tRNA synthetase alpha subunit type 1 subfamily. Tetramer of two alpha and two beta subunits. Requires Mg(2+) as cofactor.

It localises to the cytoplasm. It carries out the reaction tRNA(Phe) + L-phenylalanine + ATP = L-phenylalanyl-tRNA(Phe) + AMP + diphosphate + H(+). The protein is Phenylalanine--tRNA ligase alpha subunit of Lactobacillus johnsonii (strain CNCM I-12250 / La1 / NCC 533).